The following is a 620-amino-acid chain: 1-deoxy-D-xylulose-5-phosphate synthase (620 aa).

Thiamine diphosphate-binding positions include H80 and 121-123 (GHS). D152 is a binding site for Mg(2+). Residues 153-154 (GA), N181, Y288, and E370 each bind thiamine diphosphate. N181 contributes to the Mg(2+) binding site.

It belongs to the transketolase family. DXPS subfamily. In terms of assembly, homodimer. The cofactor is Mg(2+). Thiamine diphosphate is required as a cofactor.

The enzyme catalyses D-glyceraldehyde 3-phosphate + pyruvate + H(+) = 1-deoxy-D-xylulose 5-phosphate + CO2. It participates in metabolic intermediate biosynthesis; 1-deoxy-D-xylulose 5-phosphate biosynthesis; 1-deoxy-D-xylulose 5-phosphate from D-glyceraldehyde 3-phosphate and pyruvate: step 1/1. Catalyzes the acyloin condensation reaction between C atoms 2 and 3 of pyruvate and glyceraldehyde 3-phosphate to yield 1-deoxy-D-xylulose-5-phosphate (DXP). This chain is 1-deoxy-D-xylulose-5-phosphate synthase, found in Pseudoalteromonas translucida (strain TAC 125).